We begin with the raw amino-acid sequence, 309 residues long: MVVQLISKPSKFSQSRFLDDIRNLSAAINAPYSERTTIEALSVYSHSFHNGVVLWRVTDRPGDALNYRFYSREPIDTVSIAASAGLLSPDIANTLGKLVTSWSSLYDGTPEESCDFDAEKGLVKAWVYFGGMRPLDDILGAEGVPESVRQHEKRFKELGLQKVRHVAVDYHKQTVNLYFRAQGPISFQQATAFNALAGAEPPSQSQFIEMREFLNAVGYTFAVTINIDSGDIERVGYYALKLPERSAKKWPAINAQLERFVQFAPSYDREEMNAVAWSFGERKTYVKFERSYCGELIPLIKGWGTTLSS.

Belongs to the aromatic prenyltransferase family.

Its function is as follows. Prenyltransferase that attaches isoprenoid moieties to carbon atoms of aromatic substrates in an enzyme-catalyzed Friedel-Crafts reaction. Shows specificity for dimethylallyl diphosphate (DMAPP) and does not accept geranyl diphosphate (GPP) or isopentenyl diphosphate (IPP). Prenylates the artificial substrate 2,7-dihydroxynaphthalene (2,7-DHN), as well as dihydrophenazine-1-carboxylic acid and 4-hydroxybenzoic acid at lower levels. Only traces of products are detected with aspulvinone E or flaviolin as substrates; and no product is formed with L-tryptophan, L-tyrosine, or 4-hydroxyphenylpyruvate. Ptf seems no to be involved in the prenylation reaction in the biosynthesis of aspulvinone H and J and the physiological function of ptf remains unknown. The sequence is that of Aromatic prenyltransferase from Sclerotinia sclerotiorum (strain ATCC 18683 / 1980 / Ss-1) (White mold).